A 363-amino-acid chain; its full sequence is Protein-glutamate methylesterase/protein-glutamine glutaminase of group 3 operon (363 aa).

The Response regulatory domain maps to 7-124 (RVLIVDDSAS…RQALMESSGR (118 aa)). Aspartate 58 carries the post-translational modification 4-aspartylphosphate. One can recognise a CheB-type methylesterase domain in the interval 166-357 (PTTERIVCIG…REIMAWQQAK (192 aa)). Residues serine 177, histidine 203, and aspartate 299 contribute to the active site.

It belongs to the CheB family. Post-translationally, phosphorylated by CheA. Phosphorylation of the N-terminal regulatory domain activates the methylesterase activity.

It localises to the cytoplasm. It carries out the reaction [protein]-L-glutamate 5-O-methyl ester + H2O = L-glutamyl-[protein] + methanol + H(+). The enzyme catalyses L-glutaminyl-[protein] + H2O = L-glutamyl-[protein] + NH4(+). In terms of biological role, involved in chemotaxis. Part of a chemotaxis signal transduction system that modulates chemotaxis in response to various stimuli. Catalyzes the demethylation of specific methylglutamate residues introduced into the chemoreceptors (methyl-accepting chemotaxis proteins or MCP) by CheR. Also mediates the irreversible deamidation of specific glutamine residues to glutamic acid. In Rhodopseudomonas palustris (strain ATCC BAA-98 / CGA009), this protein is Protein-glutamate methylesterase/protein-glutamine glutaminase of group 3 operon.